We begin with the raw amino-acid sequence, 159 residues long: Ribosome maturation factor RimP (159 aa).

The protein belongs to the RimP family.

The protein localises to the cytoplasm. Its function is as follows. Required for maturation of 30S ribosomal subunits. This Geotalea uraniireducens (strain Rf4) (Geobacter uraniireducens) protein is Ribosome maturation factor RimP.